The chain runs to 228 residues: uncharacterized protein (228 aa).

The disordered stretch occupies residues 90 to 115; it reads TDESEESSSANNTTTTASHTLSNSKK. Low complexity predominate over residues 96–113; it reads SSSANNTTTTASHTLSNS.

It localises to the cytoplasm. Its subcellular location is the cell cortex. Functionally, deletion results in antifungal drug fluconazole-resistant phenotype. This is an uncharacterized protein from Saccharomyces cerevisiae (strain ATCC 204508 / S288c) (Baker's yeast).